Consider the following 299-residue polypeptide: N-acetylmuramic acid 6-phosphate etherase (299 aa).

An SIS domain is found at 54–217 (TIAQYKKGGR…STITMVGVGK (164 aa)). E82 acts as the Proton donor in catalysis. The active site involves E113.

Belongs to the GCKR-like family. MurNAc-6-P etherase subfamily. Homodimer.

The enzyme catalyses N-acetyl-D-muramate 6-phosphate + H2O = N-acetyl-D-glucosamine 6-phosphate + (R)-lactate. It participates in amino-sugar metabolism; N-acetylmuramate degradation. Its function is as follows. Specifically catalyzes the cleavage of the D-lactyl ether substituent of MurNAc 6-phosphate, producing GlcNAc 6-phosphate and D-lactate. This Staphylococcus aureus (strain USA300) protein is N-acetylmuramic acid 6-phosphate etherase.